The chain runs to 340 residues: Glycerol-3-phosphate dehydrogenase [NAD(P)+] (340 aa).

The NADPH site is built by S11, W12, R33, and K106. Sn-glycerol 3-phosphate contacts are provided by K106, G137, and S139. Residue A141 coordinates NADPH. Residues K192, D245, S255, R256, and N257 each contribute to the sn-glycerol 3-phosphate site. K192 acts as the Proton acceptor in catalysis. R256 provides a ligand contact to NADPH. Positions 280 and 282 each coordinate NADPH.

Belongs to the NAD-dependent glycerol-3-phosphate dehydrogenase family.

The protein localises to the cytoplasm. The catalysed reaction is sn-glycerol 3-phosphate + NAD(+) = dihydroxyacetone phosphate + NADH + H(+). It carries out the reaction sn-glycerol 3-phosphate + NADP(+) = dihydroxyacetone phosphate + NADPH + H(+). It participates in membrane lipid metabolism; glycerophospholipid metabolism. Catalyzes the reduction of the glycolytic intermediate dihydroxyacetone phosphate (DHAP) to sn-glycerol 3-phosphate (G3P), the key precursor for phospholipid synthesis. The sequence is that of Glycerol-3-phosphate dehydrogenase [NAD(P)+] from Bacillus mycoides (strain KBAB4) (Bacillus weihenstephanensis).